Here is a 152-residue protein sequence, read N- to C-terminus: 3-hydroxyacyl-[acyl-carrier-protein] dehydratase FabZ (152 aa).

His58 is a catalytic residue.

It belongs to the thioester dehydratase family. FabZ subfamily.

Its subcellular location is the cytoplasm. The catalysed reaction is a (3R)-hydroxyacyl-[ACP] = a (2E)-enoyl-[ACP] + H2O. Its function is as follows. Involved in unsaturated fatty acids biosynthesis. Catalyzes the dehydration of short chain beta-hydroxyacyl-ACPs and long chain saturated and unsaturated beta-hydroxyacyl-ACPs. This is 3-hydroxyacyl-[acyl-carrier-protein] dehydratase FabZ from Prochlorococcus marinus (strain MIT 9312).